The following is an 86-amino-acid chain: Photosystem I reaction center subunit PsaK 1 (86 aa).

The next 2 membrane-spanning stretches (helical) occupy residues Leu14 to Phe34 and Ala61 to Ala81.

It belongs to the PsaG/PsaK family.

It is found in the cellular thylakoid membrane. The protein is Photosystem I reaction center subunit PsaK 1 (psaK1) of Synechocystis sp. (strain ATCC 27184 / PCC 6803 / Kazusa).